The primary structure comprises 398 residues: Interleukin-1 receptor type 2 (398 aa).

An N-terminal signal peptide occupies residues 1-13 (MLRLYVLVMGVSA). The Extracellular portion of the chain corresponds to 14-343 (FTLQPAAHTG…FQTLRTTVKE (330 aa)). 3 Ig-like C2-type domains span residues 18 to 124 (PAAH…IELR), 134 to 223 (PFIS…ITRS), and 237 to 349 (PVII…STFS). 3 disulfide bridges follow: C28–C116, C50–C108, and C152–C207. Residues N66, N72, and N112 are each glycosylated (N-linked (GlcNAc...) asparagine). Residues N219 and N277 are each glycosylated (N-linked (GlcNAc...) asparagine). C258 and C326 form a disulfide bridge. The tract at residues 329–343 (HNTLSFQTLRTTVKE) is contains proteolytic cleavage site. The chain crosses the membrane as a helical span at residues 344–369 (ASSTFSWGIVLAPLSLAFLVLGGIWM). Over 370–398 (HRRCKHRTGKADGLTVLWPHHQDFQSYPK) the chain is Cytoplasmic.

It belongs to the interleukin-1 receptor family. Associates with IL1RAP to form a non-signaling interleukin-1 receptor complex. In terms of processing, a soluble form (sIL1R2) can also be produced by proteolytic cleavage at the cell surface (shedding) involving a metalloproteinase; hovever, several sIL1R2 forms ranging from 45 and 60 kDa are reported.

It localises to the secreted. The protein resides in the cell membrane. In terms of biological role, non-signaling receptor for IL1A, IL1B and IL1RN. Reduces IL1B activities. Serves as a decoy receptor by competitive binding to IL1B and preventing its binding to IL1R1. Also modulates cellular response through non-signaling association with IL1RAP after binding to IL1B. IL1R2 (membrane and secreted forms) preferentially binds IL1B and poorly IL1A and IL1RN. The secreted IL1R2 recruits secreted IL1RAP with high affinity; this complex formation may be the dominant mechanism for neutralization of IL1B by secreted/soluble receptors. The protein is Interleukin-1 receptor type 2 (IL1R2) of Homo sapiens (Human).